Here is a 78-residue protein sequence, read N- to C-terminus: MSNKGQTLQDPFLNTLRKEHVPVSIYLVNGIKLQGQIESFDQYVVLLRNTVTQMVYKHAISTVVPARAVNFQVDVPAE.

In terms of domain architecture, Sm spans 10 to 69 (DPFLNTLRKEHVPVSIYLVNGIKLQGQIESFDQYVVLLRNTVTQMVYKHAISTVVPARAV).

This sequence belongs to the Hfq family. Homohexamer.

In terms of biological role, RNA chaperone that binds small regulatory RNA (sRNAs) and mRNAs to facilitate mRNA translational regulation in response to envelope stress, environmental stress and changes in metabolite concentrations. Also binds with high specificity to tRNAs. The protein is RNA-binding protein Hfq of Bordetella petrii (strain ATCC BAA-461 / DSM 12804 / CCUG 43448).